A 182-amino-acid polypeptide reads, in one-letter code: MSLADIIKDIDKSREEQISKINDEYSKRIEELKKSCDSRIQSIKEYYEKKKEADIKTLKKVQEDKIKIDSKSIKMEKRREIVKDALDISYYHLMNITKSKRYDSILNSMVSTAIKTLGEDCEIFASESDAKKINNAKADHKINGGIIAYSKDKKRMLDFRLNSIFENIKDDLASYFYENIEE.

The protein belongs to the V-ATPase E subunit family. Has multiple subunits with at least A(3), B(3), C, D, E, F, H, I and proteolipid K(x).

It is found in the cell membrane. Functionally, component of the A-type ATP synthase that produces ATP from ADP in the presence of a proton gradient across the membrane. The sequence is that of A-type ATP synthase subunit E from Picrophilus torridus (strain ATCC 700027 / DSM 9790 / JCM 10055 / NBRC 100828 / KAW 2/3).